The chain runs to 55 residues: uncharacterized protein (55 aa).

The interval 1–25 is disordered; it reads MKNNDKKKEVQRKYREEIKKKKQKN. The helical transmembrane segment at 35–55 threads the bilayer; the sequence is TIIVVTIIVLFIFFTYTLQGF.

It localises to the membrane. This is an uncharacterized protein from Bacillus subtilis (strain 168).